The sequence spans 1082 residues: Inner tegument protein (1082 aa).

The interval 604–1082 (DHIDCLFNIS…QQDLIAPLTF (479 aa)) is interaction with large tegument protein.

The protein belongs to the herpesviridae inner tegument protein family. As to quaternary structure, interacts (via C-terminus) with the large tegument protein/LTP (via N-terminus).

It localises to the virion tegument. Its subcellular location is the host cytoplasm. The protein localises to the host nucleus. The protein resides in the host Golgi apparatus. It is found in the host trans-Golgi network. In terms of biological role, plays an essential role in cytoplasmic secondary envelopment during viral egress. Interacts with the capsid via the large tegument protein/LTP and participates in its transport to the host trans-Golgi network (TGN) where secondary envelopment occurs. Modulates tegumentation and capsid accumulation at the viral assembly complex. The polypeptide is Inner tegument protein (U30) (Homo sapiens (Human)).